Here is a 212-residue protein sequence, read N- to C-terminus: Methylthioribulose-1-phosphate dehydratase (212 aa).

His-103 and His-105 together coordinate Zn(2+).

This sequence belongs to the aldolase class II family. MtnB subfamily. Zn(2+) is required as a cofactor.

It carries out the reaction 5-(methylsulfanyl)-D-ribulose 1-phosphate = 5-methylsulfanyl-2,3-dioxopentyl phosphate + H2O. It functions in the pathway amino-acid biosynthesis; L-methionine biosynthesis via salvage pathway; L-methionine from S-methyl-5-thio-alpha-D-ribose 1-phosphate: step 2/6. Functionally, catalyzes the dehydration of methylthioribulose-1-phosphate (MTRu-1-P) into 2,3-diketo-5-methylthiopentyl-1-phosphate (DK-MTP-1-P). In Sorangium cellulosum (strain So ce56) (Polyangium cellulosum (strain So ce56)), this protein is Methylthioribulose-1-phosphate dehydratase.